Consider the following 95-residue polypeptide: Integration host factor subunit beta (95 aa).

Belongs to the bacterial histone-like protein family. As to quaternary structure, heterodimer of an alpha and a beta chain.

Functionally, this protein is one of the two subunits of integration host factor, a specific DNA-binding protein that functions in genetic recombination as well as in transcriptional and translational control. In Shewanella halifaxensis (strain HAW-EB4), this protein is Integration host factor subunit beta.